Reading from the N-terminus, the 124-residue chain is uncharacterized protein (124 aa).

Positions 1 to 19 (MRLLVQKVILIYLARYAKS) are cleaved as a signal peptide. 2 helical membrane-spanning segments follow: residues 37–57 (IAEFLWVYVGSALAYVVGVKF) and 86–108 (LGALALITIARAFCVAHINIIII).

It localises to the membrane. This is an uncharacterized protein from Saccharomyces cerevisiae (strain ATCC 204508 / S288c) (Baker's yeast).